A 430-amino-acid chain; its full sequence is Enolase (430 aa).

Glutamine 165 serves as a coordination point for (2R)-2-phosphoglycerate. The active-site Proton donor is glutamate 207. Aspartate 244, glutamate 287, and aspartate 314 together coordinate Mg(2+). Lysine 339, arginine 368, serine 369, and lysine 390 together coordinate (2R)-2-phosphoglycerate. Lysine 339 serves as the catalytic Proton acceptor.

The protein belongs to the enolase family. Component of the RNA degradosome, a multiprotein complex involved in RNA processing and mRNA degradation. It depends on Mg(2+) as a cofactor.

It is found in the cytoplasm. The protein localises to the secreted. Its subcellular location is the cell surface. It carries out the reaction (2R)-2-phosphoglycerate = phosphoenolpyruvate + H2O. It functions in the pathway carbohydrate degradation; glycolysis; pyruvate from D-glyceraldehyde 3-phosphate: step 4/5. In terms of biological role, catalyzes the reversible conversion of 2-phosphoglycerate (2-PG) into phosphoenolpyruvate (PEP). It is essential for the degradation of carbohydrates via glycolysis. This is Enolase from Xanthomonas campestris pv. campestris (strain 8004).